We begin with the raw amino-acid sequence, 79 residues long: Probable Fe(2+)-trafficking protein (79 aa).

The protein belongs to the Fe(2+)-trafficking protein family. Monomer.

Functionally, could be a mediator in iron transactions between iron acquisition and iron-requiring processes, such as synthesis and/or repair of Fe-S clusters in biosynthetic enzymes. This chain is Probable Fe(2+)-trafficking protein, found in Blochmanniella floridana.